Reading from the N-terminus, the 208-residue chain is Probable GTP-binding protein EngB (208 aa).

Residues 23 to 205 (LTSEMVVLGR…RQTLLKYLLT (183 aa)) form the EngB-type G domain. Residues 31–38 (GRSNVGKS), 57–61 (GKTRL), 84–87 (DLPG), 154–157 (TKFD), and 182–184 (FNA) each bind GTP. Mg(2+)-binding residues include Ser38 and Thr59.

This sequence belongs to the TRAFAC class TrmE-Era-EngA-EngB-Septin-like GTPase superfamily. EngB GTPase family. Mg(2+) is required as a cofactor.

Its function is as follows. Necessary for normal cell division and for the maintenance of normal septation. The protein is Probable GTP-binding protein EngB of Helicobacter acinonychis (strain Sheeba).